Here is a 315-residue protein sequence, read N- to C-terminus: Acetyl-coenzyme A carboxylase carboxyl transferase subunit alpha (315 aa).

One can recognise a CoA carboxyltransferase C-terminal domain in the interval 32–289; sequence EIDLLEASLE…KQAFVDQLEQ (258 aa).

Belongs to the AccA family. Acetyl-CoA carboxylase is a heterohexamer composed of biotin carboxyl carrier protein (AccB), biotin carboxylase (AccC) and two subunits each of ACCase subunit alpha (AccA) and ACCase subunit beta (AccD).

It localises to the cytoplasm. It catalyses the reaction N(6)-carboxybiotinyl-L-lysyl-[protein] + acetyl-CoA = N(6)-biotinyl-L-lysyl-[protein] + malonyl-CoA. The protein operates within lipid metabolism; malonyl-CoA biosynthesis; malonyl-CoA from acetyl-CoA: step 1/1. Its function is as follows. Component of the acetyl coenzyme A carboxylase (ACC) complex. First, biotin carboxylase catalyzes the carboxylation of biotin on its carrier protein (BCCP) and then the CO(2) group is transferred by the carboxyltransferase to acetyl-CoA to form malonyl-CoA. This chain is Acetyl-coenzyme A carboxylase carboxyl transferase subunit alpha, found in Staphylococcus haemolyticus (strain JCSC1435).